The chain runs to 75 residues: Protein Tlp homolog (75 aa).

The segment at 53-75 (REALDGMREEIKDEARDKKNGYM) is disordered.

It belongs to the Tlp family.

In Clostridium botulinum (strain Langeland / NCTC 10281 / Type F), this protein is Protein Tlp homolog.